The primary structure comprises 1348 residues: Vascular endothelial growth factor receptor 2 (1348 aa).

A signal peptide spans 1 to 20 (MELGPLRVLTVLLCLAPVFA). Over 21-756 (GLFISMDQPT…GAEEKTNLEL (736 aa)) the chain is Extracellular. N-linked (GlcNAc...) asparagine glycans are attached at residues asparagine 43, asparagine 47, asparagine 63, asparagine 93, asparagine 138, asparagine 153, asparagine 201, asparagine 240, asparagine 290, asparagine 310, asparagine 365, asparagine 386, asparagine 513, asparagine 556, asparagine 603, asparagine 613, asparagine 622, asparagine 666, asparagine 688, and asparagine 710. 7 consecutive Ig-like C2-type domains span residues 43 to 106 (NDTL…GDSQ), 138 to 202 (NKTV…IDNE), 220 to 312 (DLTM…KNSS), 320 to 405 (PFIH…HTFT), 412 to 534 (PQIG…RVIS), 540 to 651 (GLEI…KHLT), and 658 to 744 (PRLV…AFFS). Cysteine 50 and cysteine 100 are disulfide-bonded. A disulfide bridge links cysteine 145 with cysteine 195. An intrachain disulfide couples cysteine 241 to cysteine 299. An intrachain disulfide couples cysteine 436 to cysteine 520. Cysteine 561 and cysteine 633 are disulfide-bonded. An intrachain disulfide couples cysteine 679 to cysteine 728. A helical transmembrane segment spans residues 757 to 777 (IILVGTAVIAMFFWLLLVIIL). Over 778–1348 (RTVKRANGGD…SPAPVASLPL (571 aa)) the chain is Cytoplasmic. One can recognise a Protein kinase domain in the interval 825-1155 (LKLGKPLGRG…FSELVEHLGN (331 aa)). ATP-binding positions include 831 to 839 (LGRGAFGQV) and lysine 859. Positions 958–967 (ITSSQSSTSS) are enriched in low complexity. The tract at residues 958-983 (ITSSQSSTSSGFVEERSLSDVEEEDA) is disordered. Aspartate 1021 (proton acceptor) is an active-site residue. Residues tyrosine 1047, tyrosine 1052, tyrosine 1168, and tyrosine 1207 each carry the phosphotyrosine; by autocatalysis modification. Residues 1280–1302 (PSKSNESVMSEASNQTSGYQSGY) are disordered.

It belongs to the protein kinase superfamily. Tyr protein kinase family. CSF-1/PDGF receptor subfamily. Autophosphorylated on tyrosine residues upon ligand binding. Autophosphorylation occurs in trans, i.e. one subunit of the dimeric receptor phosphorylates tyrosine residues on the other subunit. In terms of tissue distribution, in all endothelial tissues during onset of vascularization. In later development, present in lung, heart, intestine and skin.

It localises to the cell membrane. The protein resides in the cytoplasmic vesicle. Its subcellular location is the early endosome. The protein localises to the cell junction. It is found in the endoplasmic reticulum. The enzyme catalyses L-tyrosyl-[protein] + ATP = O-phospho-L-tyrosyl-[protein] + ADP + H(+). With respect to regulation, present in an inactive conformation in the absence of bound ligand. Binding of VEGFA, VEGFC or VEGFD leads to dimerization and activation by autophosphorylation on tyrosine residues. Tyrosine-protein kinase that acts as a cell-surface receptor for VEGFA, VEGFC and/or VEGFD and plays an essential role in the regulation of angiogenesis and vascular development. Promotes proliferation, survival, migration and differentiation of endothelial cells. Promotes reorganization of the actin cytoskeleton. Binding of vascular growth factors leads to the activation of several signaling cascades. Activation of PLCG1 leads to the production of the cellular signaling molecules diacylglycerol and inositol 1,4,5-trisphosphate and the activation of protein kinase C. Mediates activation of MAPK1/ERK2, MAPK3/ERK1 and the MAP kinase signaling pathway, as well as of the AKT1 signaling pathway. Mediates phosphorylation of PIK3R1, the regulatory subunit of phosphatidylinositol 3-kinase, reorganization of the actin cytoskeleton and activation of PTK2/FAK1. Required for VEGFA-mediated induction of NOS2 and NOS3, leading to the production of the signaling molecule nitric oxide (NO) by endothelial cells. This Coturnix japonica (Japanese quail) protein is Vascular endothelial growth factor receptor 2.